Reading from the N-terminus, the 398-residue chain is Heat-inducible transcription repressor HrcA (398 aa).

The protein belongs to the HrcA family.

In terms of biological role, negative regulator of class I heat shock genes (grpE-dnaK-dnaJ and groELS operons). Prevents heat-shock induction of these operons. The protein is Heat-inducible transcription repressor HrcA of Chlamydia pneumoniae (Chlamydophila pneumoniae).